A 454-amino-acid polypeptide reads, in one-letter code: Tol-Pal system protein TolB (454 aa).

The first 30 residues, 1 to 30, serve as a signal peptide directing secretion; the sequence is MNDARSITRRRFMTLTGSGLAMLGGGHAFA.

It belongs to the TolB family. The Tol-Pal system is composed of five core proteins: the inner membrane proteins TolA, TolQ and TolR, the periplasmic protein TolB and the outer membrane protein Pal. They form a network linking the inner and outer membranes and the peptidoglycan layer.

The protein localises to the periplasm. Part of the Tol-Pal system, which plays a role in outer membrane invagination during cell division and is important for maintaining outer membrane integrity. This Bradyrhizobium diazoefficiens (strain JCM 10833 / BCRC 13528 / IAM 13628 / NBRC 14792 / USDA 110) protein is Tol-Pal system protein TolB.